A 372-amino-acid chain; its full sequence is Phospho-N-acetylmuramoyl-pentapeptide-transferase (372 aa).

The next 10 helical transmembrane spans lie at 2–22, 71–91, 98–118, 134–154, 176–196, 211–231, 251–271, 275–295, 300–320, and 349–369; these read LVWL…VSSL, TPTM…LLWA, VWIL…DDWL, YFWL…IATL, MIPF…YFVI, GLAI…AYVS, VIIV…FNAH, VFMG…IAVM, IAFA…MLQV, and QVVA…LMTL.

This sequence belongs to the glycosyltransferase 4 family. MraY subfamily. It depends on Mg(2+) as a cofactor.

Its subcellular location is the cell inner membrane. It catalyses the reaction UDP-N-acetyl-alpha-D-muramoyl-L-alanyl-gamma-D-glutamyl-meso-2,6-diaminopimeloyl-D-alanyl-D-alanine + di-trans,octa-cis-undecaprenyl phosphate = di-trans,octa-cis-undecaprenyl diphospho-N-acetyl-alpha-D-muramoyl-L-alanyl-D-glutamyl-meso-2,6-diaminopimeloyl-D-alanyl-D-alanine + UMP. Its pathway is cell wall biogenesis; peptidoglycan biosynthesis. Functionally, catalyzes the initial step of the lipid cycle reactions in the biosynthesis of the cell wall peptidoglycan: transfers peptidoglycan precursor phospho-MurNAc-pentapeptide from UDP-MurNAc-pentapeptide onto the lipid carrier undecaprenyl phosphate, yielding undecaprenyl-pyrophosphoryl-MurNAc-pentapeptide, known as lipid I. This Psychrobacter cryohalolentis (strain ATCC BAA-1226 / DSM 17306 / VKM B-2378 / K5) protein is Phospho-N-acetylmuramoyl-pentapeptide-transferase.